Here is a 446-residue protein sequence, read N- to C-terminus: NADH-quinone oxidoreductase subunit D (446 aa).

The protein belongs to the complex I 49 kDa subunit family. As to quaternary structure, NDH-1 is composed of 14 different subunits. Subunits NuoB, C, D, E, F, and G constitute the peripheral sector of the complex.

The protein localises to the cell membrane. It carries out the reaction a quinone + NADH + 5 H(+)(in) = a quinol + NAD(+) + 4 H(+)(out). Functionally, NDH-1 shuttles electrons from NADH, via FMN and iron-sulfur (Fe-S) centers, to quinones in the respiratory chain. The immediate electron acceptor for the enzyme in this species is believed to be a menaquinone. Couples the redox reaction to proton translocation (for every two electrons transferred, four hydrogen ions are translocated across the cytoplasmic membrane), and thus conserves the redox energy in a proton gradient. The protein is NADH-quinone oxidoreductase subunit D of Mycobacterium sp. (strain JLS).